The primary structure comprises 253 residues: uncharacterized protein (253 aa).

Residues isoleucine 17, serine 36, aspartate 62, asparagine 89, tyrosine 158, lysine 162, valine 191, and threonine 193 each coordinate NADP(+). Tyrosine 158 (proton donor) is an active-site residue. The active-site Lowers pKa of active site Tyr is lysine 162.

This sequence belongs to the short-chain dehydrogenases/reductases (SDR) family.

It localises to the cytoplasm. Its subcellular location is the nucleus. This is an uncharacterized protein from Schizosaccharomyces pombe (strain 972 / ATCC 24843) (Fission yeast).